Consider the following 260-residue polypeptide: 3'-5' ssDNA/RNA exonuclease TatD (260 aa).

Residues Glu-91, His-127, and His-152 each coordinate a divalent metal cation.

Belongs to the metallo-dependent hydrolases superfamily. TatD-type hydrolase family. TatD subfamily. In terms of assembly, monomer. Mg(2+) is required as a cofactor.

It is found in the cytoplasm. In terms of biological role, 3'-5' exonuclease that prefers single-stranded DNA and RNA. May play a role in the H(2)O(2)-induced DNA damage repair. This chain is 3'-5' ssDNA/RNA exonuclease TatD, found in Escherichia fergusonii (strain ATCC 35469 / DSM 13698 / CCUG 18766 / IAM 14443 / JCM 21226 / LMG 7866 / NBRC 102419 / NCTC 12128 / CDC 0568-73).